A 401-amino-acid polypeptide reads, in one-letter code: Imidazolonepropionase (401 aa).

The Fe(3+) site is built by histidine 66 and histidine 68. 2 residues coordinate Zn(2+): histidine 66 and histidine 68. Arginine 75, tyrosine 138, and histidine 171 together coordinate 4-imidazolone-5-propanoate. Position 138 (tyrosine 138) interacts with N-formimidoyl-L-glutamate. Histidine 236 serves as a coordination point for Fe(3+). Histidine 236 is a binding site for Zn(2+). Glutamine 239 contacts 4-imidazolone-5-propanoate. A Fe(3+)-binding site is contributed by aspartate 311. Residue aspartate 311 participates in Zn(2+) binding. Positions 313 and 315 each coordinate N-formimidoyl-L-glutamate. Threonine 316 provides a ligand contact to 4-imidazolone-5-propanoate.

It belongs to the metallo-dependent hydrolases superfamily. HutI family. Zn(2+) serves as cofactor. Requires Fe(3+) as cofactor.

The protein resides in the cytoplasm. The catalysed reaction is 4-imidazolone-5-propanoate + H2O = N-formimidoyl-L-glutamate. The protein operates within amino-acid degradation; L-histidine degradation into L-glutamate; N-formimidoyl-L-glutamate from L-histidine: step 3/3. Functionally, catalyzes the hydrolytic cleavage of the carbon-nitrogen bond in imidazolone-5-propanoate to yield N-formimidoyl-L-glutamate. It is the third step in the universal histidine degradation pathway. This chain is Imidazolonepropionase, found in Acinetobacter baumannii (strain ATCC 17978 / DSM 105126 / CIP 53.77 / LMG 1025 / NCDC KC755 / 5377).